A 170-amino-acid polypeptide reads, in one-letter code: Type II secretion system protein H (170 aa).

Positions 1–5 (MRQRG) are cleaved as a propeptide — leader sequence. Phe-6 bears the N-methylphenylalanine mark. A helical transmembrane segment spans residues 6–29 (FTLLEMMLILLLMGVSAGMVLLAF).

Belongs to the GSP H family. As to quaternary structure, type II secretion is composed of four main components: the outer membrane complex, the inner membrane complex, the cytoplasmic secretion ATPase and the periplasm-spanning pseudopilus. Interacts with core component PulG. Post-translationally, cleaved by prepilin peptidase. In terms of processing, methylated by prepilin peptidase at the amino group of the N-terminal phenylalanine once the leader sequence is cleaved by prepilin peptidase.

It is found in the cell inner membrane. Its function is as follows. Component of the type II secretion system required for the energy-dependent secretion of extracellular factors such as proteases and toxins from the periplasm. Part of the pseudopilus tip complex that is critical for the recognition and binding of secretion substrates. The chain is Type II secretion system protein H (pulH) from Klebsiella pneumoniae.